The primary structure comprises 845 residues: Receptor-like protein Cf-9 homolog (845 aa).

A signal peptide spans 1–19 (MGCVKLVFFMLLKLDLLEF). Residues 20 to 70 (KNMFTVNPNASDYCYDYTDQRMQSYPRTLFWNKSTDCCSWDGIHCDETTGQ) are N-cap. Topologically, residues 20-794 (KNMFTVNPNA…EEDSPMISWQ (775 aa)) are extracellular. Residues Asn28, Asn51, and Asn88 are each glycosylated (N-linked (GlcNAc...) asparagine). The LRR 1; degenerate repeat unit spans residues 71–94 (VVELDLRCSQLQGKFHSNSSLFQL). LRR repeat units lie at residues 95 to 118 (SNLK…KFGE), 119 to 143 (FSDL…ISHL), 144 to 171 (SKLH…LKNL), 172 to 193 (TQLR…SNFS), 194 to 217 (SHLT…VFHL), 219 to 242 (DLEF…KWNS), 244 to 266 (ASLM…SFSH), 267 to 291 (LTSL…LWNL), 292 to 316 (TNIE…RFEK), 318 to 338 (KRLS…SFNR), 340 to 364 (WTQL…VSGL), 365 to 388 (QNLG…IFSL), 390 to 410 (SLVV…EFKS), 411 to 434 (KTLS…LLNQ), 436 to 458 (SLQF…ICNL), 459 to 482 (KTLM…VGER), 484 to 506 (EYLL…TFSI), 507 to 531 (GNSF…LINC), 532 to 554 (KYLK…WLGY), 555 to 579 (LSQL…GSTN), 581 to 605 (FMRL…ILGN), 649 to 672 (LDSN…IIGD), 673 to 696 (LVGL…SFQN), 698 to 721 (SVLE…LASL), and 723 to 741 (FLEV…IPKG). N-linked (GlcNAc...) asparagine glycans are attached at residues Asn131, Asn170, Asn183, and Asn191. A glycan (N-linked (GlcNAc...) asparagine) is linked at Asn241. N-linked (GlcNAc...) asparagine glycans are attached at residues Asn279 and Asn290. Residues Asn337, Asn360, Asn378, and Asn398 are each glycosylated (N-linked (GlcNAc...) asparagine). N-linked (GlcNAc...) asparagine glycosylation is present at Asn446. Asn501 is a glycosylation site (N-linked (GlcNAc...) asparagine). Asn545 carries an N-linked (GlcNAc...) asparagine glycan. Residues Asn656, Asn680, and Asn696 are each glycosylated (N-linked (GlcNAc...) asparagine). Asn728 and Asn749 each carry an N-linked (GlcNAc...) asparagine glycan. Positions 742 to 794 (KQFDSFGNTSYQGNDGLRGFPLSKLCGVDDQVTTPAELDQEEEEEDSPMISWQ) are C-cap/acidic domain. The chain crosses the membrane as a helical span at residues 795–815 (GVLVGYGCGLVIGLSVIYIMW). Residues 816-845 (STQYPAWFSRMDLKLEHIITTRMKKHKKRY) lie on the Cytoplasmic side of the membrane.

Belongs to the RLP family.

The protein localises to the cell membrane. In terms of biological role, at the opposite of its homolog Cf-9 found in S.pimpinellifolium, was not able to confer resistance to the fungal pathogen C.fulvum. The chain is Receptor-like protein Cf-9 homolog from Solanum lycopersicum (Tomato).